We begin with the raw amino-acid sequence, 380 residues long: 1-deoxy-D-xylulose 5-phosphate reductoisomerase (380 aa).

NADPH-binding residues include T10, G11, S12, I13, G36, R37, N38, and N120. Position 121 (K121) interacts with 1-deoxy-D-xylulose 5-phosphate. An NADPH-binding site is contributed by E122. D146 lines the Mn(2+) pocket. Residues S147, E148, S172, and H195 each contribute to the 1-deoxy-D-xylulose 5-phosphate site. E148 serves as a coordination point for Mn(2+). Residue G201 coordinates NADPH. Residues S208, N213, K214, and E217 each contribute to the 1-deoxy-D-xylulose 5-phosphate site. E217 is a binding site for Mn(2+).

Belongs to the DXR family. It depends on Mg(2+) as a cofactor. Mn(2+) is required as a cofactor.

The enzyme catalyses 2-C-methyl-D-erythritol 4-phosphate + NADP(+) = 1-deoxy-D-xylulose 5-phosphate + NADPH + H(+). Its pathway is isoprenoid biosynthesis; isopentenyl diphosphate biosynthesis via DXP pathway; isopentenyl diphosphate from 1-deoxy-D-xylulose 5-phosphate: step 1/6. Functionally, catalyzes the NADPH-dependent rearrangement and reduction of 1-deoxy-D-xylulose-5-phosphate (DXP) to 2-C-methyl-D-erythritol 4-phosphate (MEP). In Listeria welshimeri serovar 6b (strain ATCC 35897 / DSM 20650 / CCUG 15529 / CIP 8149 / NCTC 11857 / SLCC 5334 / V8), this protein is 1-deoxy-D-xylulose 5-phosphate reductoisomerase.